We begin with the raw amino-acid sequence, 406 residues long: S-adenosylmethionine synthase (406 aa).

His-5 contributes to the ATP binding site. Residue Asp-7 coordinates Mg(2+). Glu-33 lines the K(+) pocket. The L-methionine site is built by Glu-46 and Gln-89. The flexible loop stretch occupies residues 89 to 99 (QSPDIAQGVDT). ATP-binding positions include 164-166 (DGK), 240-241 (KF), Asp-249, 255-256 (RK), Ala-272, and Lys-276. An L-methionine-binding site is contributed by Asp-249. Lys-280 lines the L-methionine pocket.

It belongs to the AdoMet synthase family. Homotetramer; dimer of dimers. It depends on Mg(2+) as a cofactor. K(+) is required as a cofactor.

It localises to the cytoplasm. The enzyme catalyses L-methionine + ATP + H2O = S-adenosyl-L-methionine + phosphate + diphosphate. Its pathway is amino-acid biosynthesis; S-adenosyl-L-methionine biosynthesis; S-adenosyl-L-methionine from L-methionine: step 1/1. Catalyzes the formation of S-adenosylmethionine (AdoMet) from methionine and ATP. The overall synthetic reaction is composed of two sequential steps, AdoMet formation and the subsequent tripolyphosphate hydrolysis which occurs prior to release of AdoMet from the enzyme. The polypeptide is S-adenosylmethionine synthase (Synechococcus sp. (strain ATCC 27144 / PCC 6301 / SAUG 1402/1) (Anacystis nidulans)).